Here is a 476-residue protein sequence, read N- to C-terminus: Vitamin D-binding protein (476 aa).

The signal sequence occupies residues 1–16; sequence MKRVLVLLLALAFGHA. 3 consecutive Albumin domains span residues 17–208, 209–394, and 395–476; these read LERG…QMKH, LSLL…LLKR, and QLTS…TLQS. 14 disulfide bridges follow: C29–C75, C74–C83, C96–C112, C111–C122, C145–C190, C189–C198, C220–C266, C265–C273, C286–C300, C299–C311, C335–C376, C375–C384, C407–C453, and C452–C462. N-linked (GlcNAc...) asparagine glycosylation is present at N288. The residue at position 434 (S434) is a Phosphoserine.

The protein belongs to the ALB/AFP/VDB family. As to quaternary structure, associates with membrane-bound immunoglobulin on the surface of B-lymphocytes and with IgG Fc receptor on the membranes of T-lymphocytes. Interacts with LRP2; the interaction is required for renal uptake of GC in complex with 25-hydroxyvitamin D3.

The protein resides in the secreted. Involved in vitamin D transport and storage, scavenging of extracellular G-actin, enhancement of the chemotactic activity of C5 alpha for neutrophils in inflammation and macrophage activation. This chain is Vitamin D-binding protein (Gc), found in Mus musculus (Mouse).